Here is a 214-residue protein sequence, read N- to C-terminus: Adenylate kinase (214 aa).

Residue 14-19 coordinates ATP; that stretch reads GSGKGT. The segment at 34-63 is NMP; it reads SSGDLFRSAIKSATPLGSKAAEYINKGLLV. AMP-binding positions include Ser35, Arg40, 61 to 63, 89 to 92, and Gln96; these read LLV and GFPR. The tract at residues 130–163 is LID; sequence SRFICPACNYVYNQSQGFKECPTCHVALIRRSDD. Arg131 contributes to the ATP binding site. Zn(2+)-binding residues include Cys134 and Cys137. 140–141 provides a ligand contact to ATP; it reads VY. Zn(2+) is bound by residues Cys150 and Cys153. AMP-binding residues include Arg160 and Arg171. Residue Thr199 participates in ATP binding.

It belongs to the adenylate kinase family. Monomer.

Its subcellular location is the cytoplasm. It carries out the reaction AMP + ATP = 2 ADP. It functions in the pathway purine metabolism; AMP biosynthesis via salvage pathway; AMP from ADP: step 1/1. In terms of biological role, catalyzes the reversible transfer of the terminal phosphate group between ATP and AMP. Plays an important role in cellular energy homeostasis and in adenine nucleotide metabolism. This chain is Adenylate kinase, found in Chlamydia caviae (strain ATCC VR-813 / DSM 19441 / 03DC25 / GPIC) (Chlamydophila caviae).